We begin with the raw amino-acid sequence, 387 residues long: Exodeoxyribonuclease 7 large subunit (387 aa).

The protein belongs to the XseA family. As to quaternary structure, heterooligomer composed of large and small subunits.

The protein resides in the cytoplasm. The catalysed reaction is Exonucleolytic cleavage in either 5'- to 3'- or 3'- to 5'-direction to yield nucleoside 5'-phosphates.. Bidirectionally degrades single-stranded DNA into large acid-insoluble oligonucleotides, which are then degraded further into small acid-soluble oligonucleotides. The sequence is that of Exodeoxyribonuclease 7 large subunit from Synechococcus sp. (strain CC9605).